Consider the following 428-residue polypeptide: UPF0229 protein YeaH (428 aa).

Residues 78–90 (GNDHFIQNDRIER) show a composition bias toward basic and acidic residues. Residues 78–111 (GNDHFIQNDRIERPQGGGGGGSGSGQGQASQDGE) are disordered. Gly residues predominate over residues 92 to 103 (QGGGGGGSGSGQ).

This sequence belongs to the UPF0229 family.

The chain is UPF0229 protein YeaH from Salmonella heidelberg (strain SL476).